The primary structure comprises 561 residues: Potassium-transporting ATPase potassium-binding subunit (561 aa).

10 helical membrane-spanning segments follow: residues Ile4–Ile24, Ala65–Leu85, Ile133–Val153, Leu177–Val197, Phe253–Phe273, Ala285–Glu305, Gly380–Gly400, Met417–Val437, Met484–Leu504, and Phe528–Leu548.

Belongs to the KdpA family. In terms of assembly, the system is composed of three essential subunits: KdpA, KdpB and KdpC.

It is found in the cell membrane. In terms of biological role, part of the high-affinity ATP-driven potassium transport (or Kdp) system, which catalyzes the hydrolysis of ATP coupled with the electrogenic transport of potassium into the cytoplasm. This subunit binds the extracellular potassium ions and delivers the ions to the membrane domain of KdpB through an intramembrane tunnel. This is Potassium-transporting ATPase potassium-binding subunit from Listeria monocytogenes serotype 4b (strain CLIP80459).